The sequence spans 25 residues: U11-ctenitoxin-Co1b (25 aa).

2 cysteine pairs are disulfide-bonded: Cys-4–Cys-18 and Cys-11–Cys-22.

In terms of assembly, monomer. In terms of tissue distribution, expressed by the venom gland.

The protein localises to the secreted. Functionally, neurotoxin. The chain is U11-ctenitoxin-Co1b from Ctenus ornatus (Brazilian spider).